Here is a 508-residue protein sequence, read N- to C-terminus: Argininosuccinate lyase (508 aa).

This sequence belongs to the lyase 1 family. Argininosuccinate lyase subfamily.

Its subcellular location is the cytoplasm. The catalysed reaction is 2-(N(omega)-L-arginino)succinate = fumarate + L-arginine. It functions in the pathway amino-acid biosynthesis; L-arginine biosynthesis; L-arginine from L-ornithine and carbamoyl phosphate: step 3/3. The protein is Argininosuccinate lyase of Methanopyrus kandleri (strain AV19 / DSM 6324 / JCM 9639 / NBRC 100938).